Reading from the N-terminus, the 720-residue chain is Glutaryl-7-aminocephalosporanic-acid acylase (720 aa).

The first 29 residues, 1–29, serve as a signal peptide directing secretion; sequence MLRVLHRAASALVMATVIGLAPAVAFALA. Positions 190–198 are cleaved as a propeptide — spacer peptide; sequence DPPDLADQG. Serine 199 functions as the Nucleophile in the catalytic mechanism. Residues histidine 221 and glutamate 653 contribute to the active site.

The protein belongs to the peptidase S45 family. Heterotetramer of two alpha and two beta subunits processed from the same precursor.

It localises to the periplasm. It carries out the reaction (7R)-7-(4-carboxybutanamido)cephalosporanate + H2O = (7R)-7-aminocephalosporanate + glutarate. Functionally, catalyzes the deacylation of 7 beta-(4-carboxybutanamido)cephalosporanic acid (glutaryl-7-aminocephalosporanic acid or GL-7-ACA) to 7-aminocephalosporanic acid (7-ACA). This chain is Glutaryl-7-aminocephalosporanic-acid acylase, found in Pseudomonas sp. (strain SY-77).